Consider the following 448-residue polypeptide: Trigger factor (448 aa).

The region spanning Gly161–Pro246 is the PPIase FKBP-type domain. Residues Ala428 to Ala448 are disordered. A compositionally biased stretch (acidic residues) spans Gly437–Ala448.

Belongs to the FKBP-type PPIase family. Tig subfamily.

Its subcellular location is the cytoplasm. It carries out the reaction [protein]-peptidylproline (omega=180) = [protein]-peptidylproline (omega=0). In terms of biological role, involved in protein export. Acts as a chaperone by maintaining the newly synthesized protein in an open conformation. Functions as a peptidyl-prolyl cis-trans isomerase. The chain is Trigger factor from Chromohalobacter salexigens (strain ATCC BAA-138 / DSM 3043 / CIP 106854 / NCIMB 13768 / 1H11).